The sequence spans 435 residues: Cytokine-dependent hematopoietic cell linker (435 aa).

Residues Y69 and Y96 each carry the phosphotyrosine; by LYN modification. The segment at 155 to 303 (KINKTPLPPP…PDPTKPDEKD (149 aa)) is disordered. Residues 160–165 (PLPPPR) are mediates interaction with PLCG1; essential for BCR signaling; involved in restoration of BCR-induced calcium response and ERK2 and JNK2 activation in BLNK-deficient cells expressing LAT. Positions 178–182 (PPAPP) are mediates interaction with LAT, GRB2, and FGR; involved in translocation to the glycolipid-enriched microdomain and restoration of BCR-induced calcium response in BLNK-deficient DT40 cells expressing LAT. Residues 226–249 (PESSCPSSNQNTQKSPPAIASSSY) show a composition bias toward polar residues. A compositionally biased stretch (basic and acidic residues) spans 290–303 (NSEKPDPTKPDEKD). Positions 309–418 (WYIGEYSRQA…RKQCYLTQPL (110 aa)) constitute an SH2 domain.

As to quaternary structure, when phosphorylated, interacts with PLCG1, PLCG2, GRB2, VAV and LAT. Associated with a tyrosine-phosphorylated polypeptide (p92) in response to immunoreceptor stimulation. Interacts with LBR and AGO2. Interacts with FGR. Part of a complex consisting of CLNK, SKAP1 and FYB1. Interacts (via SH2 domain) with FYB1; this interaction allows SKAP1 and FYB1 to promote tyrosine phosphorylation of CLNK by LYN. Interacts (via SH2 domain) with MAP4K1. In terms of processing, tyrosine-phosphorylated upon BCR cross-linking. Tyrosine phosphorylation at both Tyr-69 and Tyr-96 are required for BCR-induced calcium response and are essential to restore PLCG2-mediated signaling in BLNK-deficient DT40 cells, but this phosphorylation is dispensable in cells expressing LAT. Interacts with the SH2 domain of PLCG1 via phosphorylated Tyr-96. Tyrosine phosphorylation is increased when complexed with SKAP1 and FYB1. As to expression, expressed in T-cells, mast cells, natural killer and natural killer T cells (at protein level). Expressed in cytokine-stimulated hemopoietic cells.

It is found in the cytoplasm. In terms of biological role, an adapter protein which plays a role in the regulation of immunoreceptor signaling, including PLC-gamma-mediated B-cell antigen receptor (BCR) signaling and FC-epsilon R1-mediated mast cell degranulation. Together with FGR, it acts as a negative regulator of natural killer cell-activating receptors and inhibits interferon-gamma production. Acts as a positive regulator of both T-cell receptor and natural killer T (NKT) cell receptor signaling in CD4-positive NKT cells. Together with MAP4K1, it enhances CD3-triggered activation of T-cells and subsequent IL2 production. May be involved in tumor necrosis factor induced cell death by promoting reactive oxidative species generation, and MLKL oligomerization, ultimately leading to necrosis. Involved in phosphorylation of LAT. May be involved in high affinity immunoglobulin epsilon receptor signaling in mast cells. The chain is Cytokine-dependent hematopoietic cell linker (Clnk) from Mus musculus (Mouse).